Here is a 190-residue protein sequence, read N- to C-terminus: Glycine cleavage system transcriptional repressor (190 aa).

ACT domains follow at residues 10 to 91 (VITA…PRPP) and 97 to 176 (WVQV…GSIN).

It localises to the cytoplasm. Negative transcriptional regulator of the glycine cleavage system operon (GCV). Does not autoregulate its own expression. It is not yet known how GcvR acts as a repressor. It does not seem to bind DNA. It could interact with GcvA and suppress its activatory activity. This is Glycine cleavage system transcriptional repressor (gcvR) from Escherichia coli (strain K12).